The following is a 509-amino-acid chain: tRNA-2-methylthio-N(6)-dimethylallyladenosine synthase (509 aa).

Residues Met1 to Glu20 are disordered. The MTTase N-terminal domain maps to Arg66–Leu184. Residues Cys75, Cys111, Cys145, Cys221, Cys225, and Cys228 each coordinate [4Fe-4S] cluster. The region spanning Arg207 to Lys437 is the Radical SAM core domain. Residues Lys440–Gly503 form the TRAM domain.

This sequence belongs to the methylthiotransferase family. MiaB subfamily. Monomer. Requires [4Fe-4S] cluster as cofactor.

It is found in the cytoplasm. The enzyme catalyses N(6)-dimethylallyladenosine(37) in tRNA + (sulfur carrier)-SH + AH2 + 2 S-adenosyl-L-methionine = 2-methylsulfanyl-N(6)-dimethylallyladenosine(37) in tRNA + (sulfur carrier)-H + 5'-deoxyadenosine + L-methionine + A + S-adenosyl-L-homocysteine + 2 H(+). In terms of biological role, catalyzes the methylthiolation of N6-(dimethylallyl)adenosine (i(6)A), leading to the formation of 2-methylthio-N6-(dimethylallyl)adenosine (ms(2)i(6)A) at position 37 in tRNAs that read codons beginning with uridine. This is tRNA-2-methylthio-N(6)-dimethylallyladenosine synthase from Bacillus velezensis (strain DSM 23117 / BGSC 10A6 / LMG 26770 / FZB42) (Bacillus amyloliquefaciens subsp. plantarum).